The following is a 203-amino-acid chain: MEQAMLKTLALLVLGMHYWCATGFPVYDYDPSSLQEALSASVAKVNSQSLSPYLFRATRSSLKRVNVLDEDTLVMNLEFSVQETTCLRDSGDPSTCAFQRGYSVPTAACRSTVQMSKGQVKDVWAHCRWASSSESNSSEEMMFGDMARSHRRRNDYLLGFLSDESRSEQFRDRSLEIMRRGQPPAHRRFLNLHRRARVNSGFE.

A signal peptide spans 1 to 23 (MEQAMLKTLALLVLGMHYWCATG). 2 disulfide bridges follow: C86/C96 and C109/C127. Residue S90 is modified to Phosphoserine. Phosphoserine occurs at positions 137, 138, 162, 165, and 174.

Belongs to the SPP2 family. Post-translationally, phosphorylation sites are present in the extracellular medium.

The protein localises to the secreted. Its function is as follows. Could coordinate an aspect of bone turnover. The chain is Secreted phosphoprotein 24 (Spp2) from Mus musculus (Mouse).